Reading from the N-terminus, the 311-residue chain is Lipoyl synthase (311 aa).

[4Fe-4S] cluster-binding residues include C58, C63, C69, C84, C88, C91, and S298. Positions 70–287 (FGHGTATFMI…EQEALAMGFR (218 aa)) constitute a Radical SAM core domain.

This sequence belongs to the radical SAM superfamily. Lipoyl synthase family. [4Fe-4S] cluster serves as cofactor.

The protein resides in the cytoplasm. It carries out the reaction [[Fe-S] cluster scaffold protein carrying a second [4Fe-4S](2+) cluster] + N(6)-octanoyl-L-lysyl-[protein] + 2 oxidized [2Fe-2S]-[ferredoxin] + 2 S-adenosyl-L-methionine + 4 H(+) = [[Fe-S] cluster scaffold protein] + N(6)-[(R)-dihydrolipoyl]-L-lysyl-[protein] + 4 Fe(3+) + 2 hydrogen sulfide + 2 5'-deoxyadenosine + 2 L-methionine + 2 reduced [2Fe-2S]-[ferredoxin]. It participates in protein modification; protein lipoylation via endogenous pathway; protein N(6)-(lipoyl)lysine from octanoyl-[acyl-carrier-protein]: step 2/2. In terms of biological role, catalyzes the radical-mediated insertion of two sulfur atoms into the C-6 and C-8 positions of the octanoyl moiety bound to the lipoyl domains of lipoate-dependent enzymes, thereby converting the octanoylated domains into lipoylated derivatives. The polypeptide is Lipoyl synthase (Thiobacillus denitrificans (strain ATCC 25259 / T1)).